An 88-amino-acid polypeptide reads, in one-letter code: Acylphosphatase (88 aa).

The 86-residue stretch at 3-88 folds into the Acylphosphatase-like domain; it reads AARFVVSGVV…VPPTEDFVTG (86 aa). Catalysis depends on residues Arg-18 and Asn-36.

It belongs to the acylphosphatase family.

It carries out the reaction an acyl phosphate + H2O = a carboxylate + phosphate + H(+). The chain is Acylphosphatase (acyP) from Xanthomonas euvesicatoria pv. vesicatoria (strain 85-10) (Xanthomonas campestris pv. vesicatoria).